The chain runs to 350 residues: Small ribosomal subunit biogenesis GTPase RsgA (350 aa).

A compositionally biased stretch (polar residues) spans 1–17 (MSKNKLSKGQQRRVNAN). The tract at residues 1-33 (MSKNKLSKGQQRRVNANHQRRLKTSKEKPDYDD) is disordered. The CP-type G domain maps to 104 to 273 (TSVLTRPDFY…VIDSPGVREF (170 aa)). Residues 160–163 (NKID) and 214–222 (GQSGVGKSS) each bind GTP. 4 residues coordinate Zn(2+): C297, C302, H304, and C310.

This sequence belongs to the TRAFAC class YlqF/YawG GTPase family. RsgA subfamily. In terms of assembly, monomer. Associates with 30S ribosomal subunit, binds 16S rRNA. The cofactor is Zn(2+).

The protein resides in the cytoplasm. In terms of biological role, one of several proteins that assist in the late maturation steps of the functional core of the 30S ribosomal subunit. Helps release RbfA from mature subunits. May play a role in the assembly of ribosomal proteins into the subunit. Circularly permuted GTPase that catalyzes slow GTP hydrolysis, GTPase activity is stimulated by the 30S ribosomal subunit. The polypeptide is Small ribosomal subunit biogenesis GTPase RsgA (Shigella boydii serotype 18 (strain CDC 3083-94 / BS512)).